Consider the following 764-residue polypeptide: FAST kinase domain-containing protein 5, mitochondrial (764 aa).

The residue at position 95 (Ser95) is a Phosphoserine. At Lys507 the chain carries N6-acetyllysine. The RAP domain maps to 697-757 (LAIQFTNRNQ…RLEKLAFLHE (61 aa)).

This sequence belongs to the FAST kinase family. Found in a complex with GRSF1, DDX28, DHX30 and FASTKD2. Associates with the 12S mitochondrial rRNA (12S mt-rRNA).

It localises to the mitochondrion matrix. The protein localises to the mitochondrion nucleoid. Plays an important role in the processing of non-canonical mitochondrial mRNA precursors. This Macaca fascicularis (Crab-eating macaque) protein is FAST kinase domain-containing protein 5, mitochondrial (FASTKD5).